The sequence spans 598 residues: UvrABC system protein C (598 aa).

One can recognise a GIY-YIG domain in the interval 14-91; sequence DSPGCYLHKD…IQKNMPKYNI (78 aa). Residues 196 to 231 enclose the UVR domain; it reads DKIIEDLRSKMLAASEEMAFERAAEYRDLISGIATM.

The protein belongs to the UvrC family. In terms of assembly, interacts with UvrB in an incision complex.

Its subcellular location is the cytoplasm. The UvrABC repair system catalyzes the recognition and processing of DNA lesions. UvrC both incises the 5' and 3' sides of the lesion. The N-terminal half is responsible for the 3' incision and the C-terminal half is responsible for the 5' incision. The chain is UvrABC system protein C from Streptococcus pyogenes serotype M12 (strain MGAS2096).